A 128-amino-acid chain; its full sequence is Small ribosomal subunit protein uS9 (128 aa).

The tract at residues 106–128 is disordered; that stretch reads SRKVERKKPGRPKARKKFQFSKR. Positions 109-128 are enriched in basic residues; sequence VERKKPGRPKARKKFQFSKR.

It belongs to the universal ribosomal protein uS9 family.

This chain is Small ribosomal subunit protein uS9, found in Azobacteroides pseudotrichonymphae genomovar. CFP2.